A 265-amino-acid polypeptide reads, in one-letter code: Indole-3-glycerol phosphate synthase (265 aa).

This sequence belongs to the TrpC family.

The catalysed reaction is 1-(2-carboxyphenylamino)-1-deoxy-D-ribulose 5-phosphate + H(+) = (1S,2R)-1-C-(indol-3-yl)glycerol 3-phosphate + CO2 + H2O. The protein operates within amino-acid biosynthesis; L-tryptophan biosynthesis; L-tryptophan from chorismate: step 4/5. In Hyphomonas neptunium (strain ATCC 15444), this protein is Indole-3-glycerol phosphate synthase.